The chain runs to 210 residues: ATP-dependent Clp protease proteolytic subunit (210 aa).

Ser-113 acts as the Nucleophile in catalysis. Residue His-138 is part of the active site.

Belongs to the peptidase S14 family. As to quaternary structure, fourteen ClpP subunits assemble into 2 heptameric rings which stack back to back to give a disk-like structure with a central cavity, resembling the structure of eukaryotic proteasomes.

It localises to the cytoplasm. It catalyses the reaction Hydrolysis of proteins to small peptides in the presence of ATP and magnesium. alpha-casein is the usual test substrate. In the absence of ATP, only oligopeptides shorter than five residues are hydrolyzed (such as succinyl-Leu-Tyr-|-NHMec, and Leu-Tyr-Leu-|-Tyr-Trp, in which cleavage of the -Tyr-|-Leu- and -Tyr-|-Trp bonds also occurs).. Functionally, cleaves peptides in various proteins in a process that requires ATP hydrolysis. Has a chymotrypsin-like activity. Plays a major role in the degradation of misfolded proteins. The polypeptide is ATP-dependent Clp protease proteolytic subunit (Marinomonas sp. (strain MWYL1)).